We begin with the raw amino-acid sequence, 188 residues long: Epididymal-specific lipocalin-5 (188 aa).

The N-terminal stretch at Met-1–Gly-19 is a signal peptide. Cysteines 82 and 176 form a disulfide.

This sequence belongs to the calycin superfamily. Lipocalin family. There are two similar, immunologically cross-reacting forms of this protein, designated B and C, which probably result from different processing of the amino end. Post-translationally, the N-terminus of form C is probably blocked. As to expression, synthesized exclusively in the proximal part (caput epididymidis) of the epididymis. It makes up a substantial part of the total protein in the epididymal luminal fluid and binds to the sperm membrane.

The protein localises to the secreted. In terms of biological role, associates with spermatozoa in the epididymal fluid but does not bind tightly to them. Binds both all-trans and 9-cis retinoic acid. May act as a retinoid carrier protein which is required for epididymal function and/or sperm maturation. This Rattus norvegicus (Rat) protein is Epididymal-specific lipocalin-5 (Lcn5).